The following is a 343-amino-acid chain: Ribosomal RNA small subunit methyltransferase C (343 aa).

The protein belongs to the methyltransferase superfamily. RsmC family. Monomer.

It is found in the cytoplasm. It catalyses the reaction guanosine(1207) in 16S rRNA + S-adenosyl-L-methionine = N(2)-methylguanosine(1207) in 16S rRNA + S-adenosyl-L-homocysteine + H(+). Specifically methylates the guanine in position 1207 of 16S rRNA in the 30S particle. The protein is Ribosomal RNA small subunit methyltransferase C of Escherichia fergusonii (strain ATCC 35469 / DSM 13698 / CCUG 18766 / IAM 14443 / JCM 21226 / LMG 7866 / NBRC 102419 / NCTC 12128 / CDC 0568-73).